A 368-amino-acid chain; its full sequence is Hydrophobic dipeptide epimerase (368 aa).

Substrate contacts are provided by residues Thr143 and 168–170 (KIK). Asp197, Glu225, and Asp253 together coordinate Mg(2+). Residues Lys277 and 329-331 (DMD) contribute to the substrate site.

It belongs to the mandelate racemase/muconate lactonizing enzyme family. Requires Mg(2+) as cofactor.

Its function is as follows. Catalyzes the epimerization of various hydrophobic dipeptides, such as L-Ala-L-Phe. Has epimerase activity with L-Ala-L-Thr, L-Ala-L-Met, L-Ala-L-Tyr, as well as L-Phe-L-Met, L-Phe-L-Ser and L-Phe-L-Thr (in vitro). The polypeptide is Hydrophobic dipeptide epimerase (Citrifermentans bemidjiense (strain ATCC BAA-1014 / DSM 16622 / JCM 12645 / Bem) (Geobacter bemidjiensis)).